Reading from the N-terminus, the 475-residue chain is MLSIIVFGASGDLATKMTFPALFALYVRKIIPEDFQIIGYARSKLSQEAANKIVTAHIPIDDTVGASQKALNTFVEHYKYVPGTYDKPESFEMLNSIIAEKETAPASECTRIFYLVLPPHLFAPVSELIKSKAHPNGMVTRLIVEKPIGFDYKSADAILSDLSKHWSAKDTFKVDHFLGEDMIDGFTAIRFANSMFEPIWNREHIESVRVDFREDFGCEGRGGYFEGAGILRDVVQNHLLQLLTLLCIEEPKSQDAEDIIKCKVDFLKSLHPVSKEDIVYGQYTKSANGKVPGYRELDGVADDSEVSTFCALQLRSEAPRWKGIPIIISAGKGLDRDYFEARITFKRREGGMFPTVDSSNVLVLRVYPKEFIALKGHIKQPGFSRQIVPVTLDVKYPEAFPDTWIHKAYEVVIADAINGKHTHFISDDEVRTSWKIFDDVLDTTGDLSPLPYAFGSHHGPDATLEFFKKRNLEWD.

NADP(+) contacts are provided by Arg42 and Lys146. Residues Lys146, Glu214, and Asp233 each contribute to the D-glucose 6-phosphate site. His238 serves as the catalytic Proton acceptor. Lys332 lines the D-glucose 6-phosphate pocket. NADP(+)-binding residues include Arg342 and Arg365.

It belongs to the glucose-6-phosphate dehydrogenase family.

The protein resides in the cytoplasm. The enzyme catalyses D-glucose 6-phosphate + NADP(+) = 6-phospho-D-glucono-1,5-lactone + NADPH + H(+). It participates in carbohydrate degradation; pentose phosphate pathway; D-ribulose 5-phosphate from D-glucose 6-phosphate (oxidative stage): step 1/3. Its function is as follows. Catalyzes the rate-limiting step of the oxidative pentose-phosphate pathway, which represents a route for the dissimilation of carbohydrates besides glycolysis. The main function of this enzyme is to provide reducing power (NADPH) and pentose phosphates for fatty acid and nucleic acid synthesis. The sequence is that of Glucose-6-phosphate 1-dehydrogenase gcd1 from Schizosaccharomyces pombe (strain 972 / ATCC 24843) (Fission yeast).